Here is a 308-residue protein sequence, read N- to C-terminus: Glutaminase (308 aa).

The substrate site is built by Ser-65, Asn-116, Glu-161, Asn-168, Tyr-192, Tyr-244, and Val-262.

It belongs to the glutaminase family. In terms of assembly, homotetramer.

The catalysed reaction is L-glutamine + H2O = L-glutamate + NH4(+). This Geobacillus kaustophilus (strain HTA426) protein is Glutaminase.